The chain runs to 290 residues: 4-diphosphocytidyl-2-C-methyl-D-erythritol kinase (290 aa).

Lysine 14 is a catalytic residue. 103 to 113 (PMGGGLGGGSS) is a binding site for ATP. Aspartate 145 is an active-site residue.

This sequence belongs to the GHMP kinase family. IspE subfamily. In terms of assembly, homodimer.

The enzyme catalyses 4-CDP-2-C-methyl-D-erythritol + ATP = 4-CDP-2-C-methyl-D-erythritol 2-phosphate + ADP + H(+). It participates in isoprenoid biosynthesis; isopentenyl diphosphate biosynthesis via DXP pathway; isopentenyl diphosphate from 1-deoxy-D-xylulose 5-phosphate: step 3/6. Functionally, catalyzes the phosphorylation of the position 2 hydroxy group of 4-diphosphocytidyl-2C-methyl-D-erythritol. The polypeptide is 4-diphosphocytidyl-2-C-methyl-D-erythritol kinase (Pectobacterium carotovorum subsp. carotovorum (strain PC1)).